A 174-amino-acid chain; its full sequence is Balbiani ring protein 1 (174 aa).

The segment at 28-174 (KCRCTSAGKP…RPEGCGSAMR (147 aa)) is disordered. 8 repeat units span residues 42-52 (EPSKGSKPRPE), 53-63 (KPSKGSKPRPE), 64-74 (KPSKGSKPKPE), 75-85 (KPSKGSKPRPE), 124-134 (EPSKGSKPRPE), 135-145 (KPSKESKPRPE), 146-156 (KPSKGSKPRPE), and 157-167 (KPSKGSKPRPE). 4 X 11 AA tandem repeats stretches follow at residues 42–85 (EPSK…PRPE) and 124–167 (EPSK…PRPE). 2 stretches are compositionally biased toward basic and acidic residues: residues 49-100 (PRPE…EKCA) and 121-159 (RKSE…EKPS).

As to expression, salivary gland.

It is found in the secreted. Used by the larvae to construct a supramolecular structure, the larval tube. The polypeptide is Balbiani ring protein 1 (BR1) (Chironomus tentans (Midge)).